Reading from the N-terminus, the 450-residue chain is MTTKSLSELLEELTPKRVVEELNKYVVGQEEAKKAVAIALRNRWRRQKLPENLRNEVIPKNILMIGPTGVGKTEIARRLANLIKAPFVKVEATKYTEIGYVGRDVESMVRELVEVSFQMVKQEKMKEVRERARRLAEERLLDYLVPHQFTSFGIRESRDAGKREELRQKLRKGELDDRIVEIEVKEKTVPMVGIAGPPGLEELENQIKEMLSGLIPSKRRRKVKVKEALQILEQEEAEKLIDMEEVAREAIYRAENFGIIFIDEIDKIAVKTPGAGPGVSREGVQRDLLPILEGTTVNTKYGPVKTDHILFIGAGAFHMAKPSDLIPELQGRFPIRVELKPLTKEDFKRILVEPENALTKQYIELLKTENVYLEFTDDAIEEIARIAEEINTKTENIGARRLHTVMEKLLEDISFNAPEMAGQTIIIDAKFVKAKLENLVKDEELSRYIL.

Residues valine 27, 69–74 (GVGKTE), aspartate 263, glutamate 328, and arginine 400 each bind ATP.

This sequence belongs to the ClpX chaperone family. HslU subfamily. As to quaternary structure, a double ring-shaped homohexamer of HslV is capped on each side by a ring-shaped HslU homohexamer. The assembly of the HslU/HslV complex is dependent on binding of ATP.

Its subcellular location is the cytoplasm. In terms of biological role, ATPase subunit of a proteasome-like degradation complex; this subunit has chaperone activity. The binding of ATP and its subsequent hydrolysis by HslU are essential for unfolding of protein substrates subsequently hydrolyzed by HslV. HslU recognizes the N-terminal part of its protein substrates and unfolds these before they are guided to HslV for hydrolysis. This Aquifex aeolicus (strain VF5) protein is ATP-dependent protease ATPase subunit HslU.